A 414-amino-acid chain; its full sequence is Collagenase (414 aa).

The protein belongs to the peptidase U32 family. In terms of assembly, homodimer. It depends on a metal cation as a cofactor.

Functionally, has collagenase activity. Hydrolyzes type I collagen. May play a role in virulence. The chain is Collagenase (prtC) from Porphyromonas gingivalis (strain ATCC BAA-308 / W83).